The primary structure comprises 370 residues: Protein-tyrosine sulfotransferase 1 (370 aa).

The Cytoplasmic portion of the chain corresponds to 1–8; that stretch reads MVGKLKQN. A helical; Signal-anchor for type II membrane protein membrane pass occupies residues 9–25; the sequence is LLLACLVISSVTVFYLG. At 26–370 the chain is on the lumenal side; that stretch reads QHAMECHHRI…KEKPQTEQVE (345 aa). Asparagine 60 carries an N-linked (GlcNAc...) asparagine glycan. 79–83 serves as a coordination point for 3'-phosphoadenylyl sulfate; sequence RSGTT. Cysteine 97 and cysteine 157 are oxidised to a cystine. Glutamate 100 acts as the Proton donor/acceptor in catalysis. Residues 102–106 form an interaction with peptide substrate region; that stretch reads RVIPR. Positions 184, 192, and 196 each coordinate 3'-phosphoadenylyl sulfate. The cysteines at positions 226 and 234 are disulfide-linked. Tyrosine 239 is a 3'-phosphoadenylyl sulfate binding site. Residue asparagine 262 is glycosylated (N-linked (GlcNAc...) asparagine). 3'-phosphoadenylyl sulfate-binding positions include 286–295 and lysine 301; that span reads STDQVIKPVN.

It belongs to the protein sulfotransferase family. In terms of assembly, homodimer. Can also form heterodimers with TPST2. In terms of processing, N-glycosylated.

The protein localises to the golgi apparatus membrane. It catalyses the reaction L-tyrosyl-[protein] + 3'-phosphoadenylyl sulfate = O-sulfo-L-tyrosine-[protein] + adenosine 3',5'-bisphosphate + H(+). Catalyzes the O-sulfation of tyrosine residues within acidic motifs of polypeptides, using 3'-phosphoadenylyl sulfate (PAPS) as cosubstrate. The sequence is that of Protein-tyrosine sulfotransferase 1 (Tpst1) from Rattus norvegicus (Rat).